Here is a 507-residue protein sequence, read N- to C-terminus: Cysteine--tRNA ligase (507 aa).

A Zn(2+)-binding site is contributed by cysteine 29. A 'HIGH' region motif is present at residues proline 31 to asparagine 41. Cysteine 207, histidine 232, and glutamate 236 together coordinate Zn(2+). The 'KMSKS' region motif lies at lysine 265–serine 269. Lysine 268 contacts ATP.

It belongs to the class-I aminoacyl-tRNA synthetase family. Monomer. Zn(2+) serves as cofactor.

The protein localises to the cytoplasm. It carries out the reaction tRNA(Cys) + L-cysteine + ATP = L-cysteinyl-tRNA(Cys) + AMP + diphosphate. The polypeptide is Cysteine--tRNA ligase (Neorickettsia sennetsu (strain ATCC VR-367 / Miyayama) (Ehrlichia sennetsu)).